The primary structure comprises 273 residues: Putative pyruvate, phosphate dikinase regulatory protein 2 (273 aa).

151–158 (GISRTSKT) provides a ligand contact to ADP.

Belongs to the pyruvate, phosphate/water dikinase regulatory protein family. PDRP subfamily.

It carries out the reaction N(tele)-phospho-L-histidyl/L-threonyl-[pyruvate, phosphate dikinase] + ADP = N(tele)-phospho-L-histidyl/O-phospho-L-threonyl-[pyruvate, phosphate dikinase] + AMP + H(+). The enzyme catalyses N(tele)-phospho-L-histidyl/O-phospho-L-threonyl-[pyruvate, phosphate dikinase] + phosphate + H(+) = N(tele)-phospho-L-histidyl/L-threonyl-[pyruvate, phosphate dikinase] + diphosphate. Bifunctional serine/threonine kinase and phosphorylase involved in the regulation of the pyruvate, phosphate dikinase (PPDK) by catalyzing its phosphorylation/dephosphorylation. This chain is Putative pyruvate, phosphate dikinase regulatory protein 2, found in Staphylococcus saprophyticus subsp. saprophyticus (strain ATCC 15305 / DSM 20229 / NCIMB 8711 / NCTC 7292 / S-41).